The chain runs to 297 residues: Tumor necrosis factor receptor superfamily member 27 (297 aa).

Residues 1–138 are Extracellular-facing; sequence MDCQENEYWD…TPTVPPQEAT (138 aa). TNFR-Cys repeat units lie at residues 2 to 41, 43 to 83, and 85 to 118; these read DCQE…DAYC, ACPP…NAVC, and DCLP…EVQC. 8 disulfides stabilise this stretch: cysteine 3–cysteine 15, cysteine 18–cysteine 31, cysteine 21–cysteine 41, cysteine 44–cysteine 58, cysteine 61–cysteine 75, cysteine 64–cysteine 83, cysteine 86–cysteine 104, and cysteine 107–cysteine 118. N-linked (GlcNAc...) asparagine glycosylation occurs at asparagine 74. Residues 139–159 form a helical; Signal-anchor for type III membrane protein membrane-spanning segment; it reads LVALVSSLLVVFTLAFLGLFF. Residues 160-297 are Cytoplasmic-facing; it reads LYCKQFFNRH…LNVPFEVPSP (138 aa). Residues 272–281 are compositionally biased toward polar residues; the sequence is ETLGGNTVES. Residues 272–297 form a disordered region; that stretch reads ETLGGNTVESTGDRLELNVPFEVPSP.

In terms of assembly, associates with TRAF1, TRAF3 and TRAF6.

Its subcellular location is the membrane. Functionally, receptor for EDA isoform A2, but not for EDA isoform A1. Mediates the activation of the NF-kappa-B and JNK pathways. Activation seems to be mediated by binding to TRAF3 and TRAF6. This chain is Tumor necrosis factor receptor superfamily member 27 (EDA2R), found in Homo sapiens (Human).